The chain runs to 126 residues: Cyclin-dependent kinase 2-associated protein 2 (126 aa).

The disordered stretch occupies residues 1–48; the sequence is MSYKPIAPAPSSTPGSSTPGPGTPVPTGSVPSPSGSVPGAGAPFRPLF. Residues 9–43 are compositionally biased toward low complexity; it reads APSSTPGSSTPGPGTPVPTGSVPSPSGSVPGAGAP. The interaction with CDK2 stretch occupies residues 64–106; that stretch reads PPGAQGSQSTYTDLLSVIEEMGKEIRPTYAGSKSAMERLKRGI.

The protein belongs to the CDK2AP family. As to quaternary structure, component of the nucleosome remodeling and deacetylase (NuRD) repressor complex, composed of core proteins MTA1, MTA2, MTA3, RBBP4, RBBP7, HDAC1, HDAC2, MBD2, MBD3, and peripherally associated proteins CDK2AP1, CDK2AP2, GATAD2A, GATAD2B, CHD3, CHD4 and CHD5. The exact stoichiometry of the NuRD complex is unknown, and some subunits such as MBD2 and MBD3, GATAD2A and GATAD2B, and CHD3, CHD4 and CHD5 define mutually exclusive NuRD complexes. Interacts with CDK2AP1. Interacts with CDK2. Interacts with MAPK1. Post-translationally, phosphorylated by MAPK1 and CDK2. Ubiquitous.

Its subcellular location is the cytoplasm. The protein localises to the nucleus. Functionally, acts as a component of the histone deacetylase NuRD complex which participates in the remodeling of chromatin. Inhibits cell cycle G1/S phase transition by repressing CDK2 expression and activation; represses CDK2 activation by inhibiting its interaction with cyclin E and A. Plays a role in regulating the self-renewal of embryonic stem cells (ESCs) and in maintaining cell survival during terminal differentiation of ESCs. Regulates microtubule organization of metaphase II oocytes. The polypeptide is Cyclin-dependent kinase 2-associated protein 2 (CDK2AP2) (Homo sapiens (Human)).